The primary structure comprises 158 residues: Endoribonuclease YbeY (158 aa).

Positions 121, 125, and 131 each coordinate Zn(2+).

The protein belongs to the endoribonuclease YbeY family. The cofactor is Zn(2+).

It is found in the cytoplasm. Single strand-specific metallo-endoribonuclease involved in late-stage 70S ribosome quality control and in maturation of the 3' terminus of the 16S rRNA. The chain is Endoribonuclease YbeY from Exiguobacterium sibiricum (strain DSM 17290 / CCUG 55495 / CIP 109462 / JCM 13490 / 255-15).